The primary structure comprises 251 residues: Ubiquinone/menaquinone biosynthesis C-methyltransferase UbiE (251 aa).

S-adenosyl-L-methionine contacts are provided by residues Thr-74, Asp-95, and 123–124 (NA).

The protein belongs to the class I-like SAM-binding methyltransferase superfamily. MenG/UbiE family.

The catalysed reaction is a 2-demethylmenaquinol + S-adenosyl-L-methionine = a menaquinol + S-adenosyl-L-homocysteine + H(+). The enzyme catalyses a 2-methoxy-6-(all-trans-polyprenyl)benzene-1,4-diol + S-adenosyl-L-methionine = a 5-methoxy-2-methyl-3-(all-trans-polyprenyl)benzene-1,4-diol + S-adenosyl-L-homocysteine + H(+). The protein operates within quinol/quinone metabolism; menaquinone biosynthesis; menaquinol from 1,4-dihydroxy-2-naphthoate: step 2/2. It participates in cofactor biosynthesis; ubiquinone biosynthesis. In terms of biological role, methyltransferase required for the conversion of demethylmenaquinol (DMKH2) to menaquinol (MKH2) and the conversion of 2-polyprenyl-6-methoxy-1,4-benzoquinol (DDMQH2) to 2-polyprenyl-3-methyl-6-methoxy-1,4-benzoquinol (DMQH2). In Shewanella frigidimarina (strain NCIMB 400), this protein is Ubiquinone/menaquinone biosynthesis C-methyltransferase UbiE.